A 215-amino-acid polypeptide reads, in one-letter code: Phosphatidylserine decarboxylase proenzyme (215 aa).

Ser184 serves as the catalytic Schiff-base intermediate with substrate; via pyruvic acid. Residue Ser184 is modified to Pyruvic acid (Ser); by autocatalysis.

This sequence belongs to the phosphatidylserine decarboxylase family. PSD-A subfamily. Heterodimer of a large membrane-associated beta subunit and a small pyruvoyl-containing alpha subunit. The cofactor is pyruvate. In terms of processing, is synthesized initially as an inactive proenzyme. Formation of the active enzyme involves a self-maturation process in which the active site pyruvoyl group is generated from an internal serine residue via an autocatalytic post-translational modification. Two non-identical subunits are generated from the proenzyme in this reaction, and the pyruvate is formed at the N-terminus of the alpha chain, which is derived from the carboxyl end of the proenzyme. The post-translation cleavage follows an unusual pathway, termed non-hydrolytic serinolysis, in which the side chain hydroxyl group of the serine supplies its oxygen atom to form the C-terminus of the beta chain, while the remainder of the serine residue undergoes an oxidative deamination to produce ammonia and the pyruvoyl prosthetic group on the alpha chain.

The protein resides in the cell membrane. It carries out the reaction a 1,2-diacyl-sn-glycero-3-phospho-L-serine + H(+) = a 1,2-diacyl-sn-glycero-3-phosphoethanolamine + CO2. It participates in phospholipid metabolism; phosphatidylethanolamine biosynthesis; phosphatidylethanolamine from CDP-diacylglycerol: step 2/2. Its function is as follows. Catalyzes the formation of phosphatidylethanolamine (PtdEtn) from phosphatidylserine (PtdSer). This chain is Phosphatidylserine decarboxylase proenzyme, found in Aromatoleum aromaticum (strain DSM 19018 / LMG 30748 / EbN1) (Azoarcus sp. (strain EbN1)).